A 253-amino-acid chain; its full sequence is tRNA pseudouridine synthase A (253 aa).

Catalysis depends on aspartate 51, which acts as the Nucleophile. A substrate-binding site is contributed by tyrosine 110.

It belongs to the tRNA pseudouridine synthase TruA family. In terms of assembly, homodimer.

It catalyses the reaction uridine(38/39/40) in tRNA = pseudouridine(38/39/40) in tRNA. In terms of biological role, formation of pseudouridine at positions 38, 39 and 40 in the anticodon stem and loop of transfer RNAs. This Wolinella succinogenes (strain ATCC 29543 / DSM 1740 / CCUG 13145 / JCM 31913 / LMG 7466 / NCTC 11488 / FDC 602W) (Vibrio succinogenes) protein is tRNA pseudouridine synthase A.